The following is a 799-amino-acid chain: Lon protease 4 (799 aa).

In terms of domain architecture, Lon N-terminal spans 15 to 204 (FPLLPLRTGV…RVAGLLAEAS (190 aa)). 356 to 363 (GPPGVGKT) is an ATP binding site. A Lon proteolytic domain is found at 595-776 (TSVAGVATGL…SQVIAAALEE (182 aa)). Residues serine 682 and lysine 725 contribute to the active site.

The protein belongs to the peptidase S16 family. As to quaternary structure, homohexamer. Organized in a ring with a central cavity.

The protein localises to the cytoplasm. It carries out the reaction Hydrolysis of proteins in presence of ATP.. Its function is as follows. ATP-dependent serine protease that mediates the selective degradation of mutant and abnormal proteins as well as certain short-lived regulatory proteins. Required for cellular homeostasis and for survival from DNA damage and developmental changes induced by stress. Degrades polypeptides processively to yield small peptide fragments that are 5 to 10 amino acids long. Binds to DNA in a double-stranded, site-specific manner. The protein is Lon protease 4 of Sorangium cellulosum (strain So ce56) (Polyangium cellulosum (strain So ce56)).